The primary structure comprises 387 residues: Succinate--CoA ligase [ADP-forming] subunit beta (387 aa).

Positions 9 to 236 (KELFAKHNVP…RDATDPLELK (228 aa)) constitute an ATP-grasp domain. ATP-binding positions include K45, 52–54 (GRG), S94, and E99. The Mg(2+) site is built by N191 and D205. Residues N256 and 318–320 (GIT) each bind substrate.

Belongs to the succinate/malate CoA ligase beta subunit family. In terms of assembly, heterotetramer of two alpha and two beta subunits. The cofactor is Mg(2+).

The catalysed reaction is succinate + ATP + CoA = succinyl-CoA + ADP + phosphate. It carries out the reaction GTP + succinate + CoA = succinyl-CoA + GDP + phosphate. The protein operates within carbohydrate metabolism; tricarboxylic acid cycle; succinate from succinyl-CoA (ligase route): step 1/1. In terms of biological role, succinyl-CoA synthetase functions in the citric acid cycle (TCA), coupling the hydrolysis of succinyl-CoA to the synthesis of either ATP or GTP and thus represents the only step of substrate-level phosphorylation in the TCA. The beta subunit provides nucleotide specificity of the enzyme and binds the substrate succinate, while the binding sites for coenzyme A and phosphate are found in the alpha subunit. The polypeptide is Succinate--CoA ligase [ADP-forming] subunit beta (Mycolicibacterium smegmatis (strain ATCC 700084 / mc(2)155) (Mycobacterium smegmatis)).